We begin with the raw amino-acid sequence, 252 residues long: GPI alpha-1,4-mannosyltransferase I, stabilizing subunit (252 aa).

Residues 1–22 form the signal peptide; it reads MAASALAWLLLWAAGLVGRLAA. 2 N-linked (GlcNAc...) asparagine glycosylation sites follow: N97 and N209. The chain crosses the membrane as a helical span at residues 225 to 245; sequence VCSVTLLITVLCSTLILLAVF.

This sequence belongs to the PIGX family. As to quaternary structure, part of the glycosylphosphatidylinositol-mannosyltransferase I complex that is composed of PIGM and PIGX. Interacts with PIGM; PIGX stabilizes PIGM.

It localises to the endoplasmic reticulum membrane. Its pathway is glycolipid biosynthesis; glycosylphosphatidylinositol-anchor biosynthesis. Stabilizing subunit of the glycosylphosphatidylinositol-mannosyltransferase I complex which catalyzes the transfer of the first mannose, via an alpha-1,4 bond from a dolichol-phosphate-mannose (Dol-P-Man) to the glucosaminyl acyl phosphatidylinositol (GlcN-(acyl)PI) intermediate to generate alpha-D-Man-(1-&gt;4)-alpha-D-GlcN-(1-&gt;6)-(1-radyl,2-acyl-sn-glycero-3-phospho)-2-acyl-inositol and participates in the sixth step of the glycosylphosphatidylinositol-anchor biosynthesis. Probably acts by stabilizing the mannosyltransferase PIGM. This Rattus norvegicus (Rat) protein is GPI alpha-1,4-mannosyltransferase I, stabilizing subunit.